The following is a 156-amino-acid chain: Putative pre-16S rRNA nuclease (156 aa).

Belongs to the YqgF nuclease family.

It is found in the cytoplasm. Functionally, could be a nuclease involved in processing of the 5'-end of pre-16S rRNA. The polypeptide is Putative pre-16S rRNA nuclease (Ehrlichia chaffeensis (strain ATCC CRL-10679 / Arkansas)).